Reading from the N-terminus, the 521-residue chain is Vang-like protein 2 (521 aa).

A disordered region spans residues 1–81 (MDNDSQYSGY…TTVVTGTSEH (81 aa)). Over 1–108 (MDNDSQYSGY…AKLDCSRHLG (108 aa)) the chain is Cytoplasmic. Over residues 15 to 33 (GHSRSSRKHRDRRERHRSK) the composition is skewed to basic residues. Basic and acidic residues predominate over residues 57–67 (ESTRGEDRDDN). Low complexity predominate over residues 69–81 (GETTTVVTGTSEH). Residues 109 to 129 (VVIGGALALLSFLTPIAFMLL) form a helical membrane-spanning segment. Over 130 to 147 (PQILWREDLEQCGTACEG) the chain is Extracellular. A helical membrane pass occupies residues 148-168 (LFISVAFKLLILLLGSWALFF). Topologically, residues 169 to 178 (RRPKAFFPRV) are cytoplasmic. Residues 179–199 (FVFRALLMVLVFLLVVSYWLF) form a helical membrane-spanning segment. At 200–218 (YGVRILESRDKNYQGIVQY) the chain is on the extracellular side. The chain crosses the membrane as a helical span at residues 219 to 239 (AVSLVDALLFVHYLAVVLLEL). Over 240 to 521 (RQLQPQFTVK…VMRLQSETSV (282 aa)) the chain is Cytoplasmic. The PDZ-binding signature appears at 518 to 521 (ETSV).

The protein belongs to the Vang family. In terms of assembly, interacts with dvl/dsh. Interacts with prickle3.

It localises to the cell membrane. Its function is as follows. Has a role in non-canonical Wnt/planar cell polarity (PCP) signaling; can recruit dvl/dsh and prickle from the cytoplasm to the plasma membrane. Acts in a PCP complex to regulate the polarized assembly of fibronectrin on the surface of the mesoderm during gastrulation. Regulates convergent extension in both dorsal mesoderm and neural tissue without affecting cell fate. Regulates neural fold closure during neurulation. May be required for cell surface localization of fzd3 and fzd6 in the inner ear. In Xenopus tropicalis (Western clawed frog), this protein is Vang-like protein 2.